The following is a 413-amino-acid chain: Inactive serine protease 35 (413 aa).

Residues 1–16 (MENMLLWLIFFTPGWT) form the signal peptide. An N-linked (GlcNAc...) asparagine glycan is attached at Asn90. In terms of domain architecture, Peptidase S1 spans 124-408 (VYGTDSRFSI…ICLWIHGNDA (285 aa)). Cysteines 154 and 170 form a disulfide. Basic residues predominate over residues 191–207 (MRNKSGGKKRRGSKRSR). The segment at 191-250 (MRNKSGGKKRRGSKRSRREASGGDQREGTREHLRERAKGGRRRKKSGRGQRIAEGRPSFQ) is disordered. A compositionally biased stretch (basic and acidic residues) spans 208–228 (REASGGDQREGTREHLRERAK). Basic residues predominate over residues 229–238 (GGRRRKKSGR).

The protein belongs to the peptidase S1 family.

The protein resides in the secreted. This is Inactive serine protease 35 (PRSS35) from Homo sapiens (Human).